Consider the following 152-residue polypeptide: Ribosome maturation factor RimP (152 aa).

This sequence belongs to the RimP family.

The protein resides in the cytoplasm. In terms of biological role, required for maturation of 30S ribosomal subunits. The chain is Ribosome maturation factor RimP from Pseudothermotoga lettingae (strain ATCC BAA-301 / DSM 14385 / NBRC 107922 / TMO) (Thermotoga lettingae).